The following is a 546-amino-acid chain: Arginine--tRNA ligase (546 aa).

The 'HIGH' region motif lies at 122-132; it reads ANPTGPFTVGH.

Belongs to the class-I aminoacyl-tRNA synthetase family. Monomer.

The protein localises to the cytoplasm. The enzyme catalyses tRNA(Arg) + L-arginine + ATP = L-arginyl-tRNA(Arg) + AMP + diphosphate. The polypeptide is Arginine--tRNA ligase (Thermotoga petrophila (strain ATCC BAA-488 / DSM 13995 / JCM 10881 / RKU-1)).